Consider the following 352-residue polypeptide: Protein RecA (352 aa).

An ATP-binding site is contributed by 67 to 74 (GPESSGKT). The tract at residues 332–352 (VKPADAESKEDSPKLKAVDGF) is disordered. The segment covering 335 to 352 (ADAESKEDSPKLKAVDGF) has biased composition (basic and acidic residues).

Belongs to the RecA family.

The protein resides in the cytoplasm. Can catalyze the hydrolysis of ATP in the presence of single-stranded DNA, the ATP-dependent uptake of single-stranded DNA by duplex DNA, and the ATP-dependent hybridization of homologous single-stranded DNAs. It interacts with LexA causing its activation and leading to its autocatalytic cleavage. The polypeptide is Protein RecA (Pseudarthrobacter chlorophenolicus (strain ATCC 700700 / DSM 12829 / CIP 107037 / JCM 12360 / KCTC 9906 / NCIMB 13794 / A6) (Arthrobacter chlorophenolicus)).